The following is a 308-amino-acid chain: Polyketide transferase claH (308 aa).

The segment at 50-280 (SDIAVYFSQQ…RVEVAAGKSH (231 aa)) is abhydrolase domain.

Belongs to the polyketide transferase af380 family.

The protein operates within secondary metabolite biosynthesis. Polyketide transferase; part of the cla gene cluster that produces clavatol and ortho-quinone methide. The clavatol biosynthesis cluster cla and the terrestric acid cluster tra are both involved in the production of peniphenones and penilactones. The non-reducing PKS claF is responsible for the formation of clavatol from successive condensations of 3 malonyl-CoA units, presumably with a simple acetyl-CoA starter unit, and 2 methylation steps. The esterase claE probably collaborates with claF by catalyzing the hydrolysis of ACP-bound acyl intermediates to free the ACP from stalled intermediates. The clavatol oxidase claD then converts clavatol to hydroxyclavatol. Spontaneous dehydration of hydroxyclavatol leads to the accumulation of the highly active ortho-quinone methide. On the other hand, the PKS-NRPS hybrid traA is involved in the formation of crustosic acid, with the help of traB and traD. The polyketide synthase module (PKS) of traA is responsible for the synthesis of the polyketide backbone via the condensation of an acetyl-CoA starter unit with 3 malonyl-CoA units. The downstream nonribosomal peptide synthetase (NRPS) module then amidates the carboxyl end of the polyketide with L-malic acid. Because traA lacks a designated enoylreductase (ER) domain, the required activity is provided the enoyl reductase traG. Crustosic acid undergoes decarboxylation and isomerization to the terrestric acid, catalyzed by the 2-oxoglutarate-dependent dioxygenase traH. Both acids are further converted to the 2 gamma-butyrolactones (R)-5-methyltetronic acid and (S)-5-carboxylmethyltetronic acid, with involvement of the cytochrome P450 monooxygenase claJ. Spontaneous addition of the methide to these gamma-butyrolactones leads to peniphenone D and penilactone D, which undergo again stereospecific attacking by methide to give penilactones A and B. The function of the polyketide transferase claH has not been investigated yet. This chain is Polyketide transferase claH, found in Penicillium crustosum (Blue mold fungus).